Consider the following 211-residue polypeptide: Large ribosomal subunit protein bL9 (211 aa).

The tract at residues 183–211 (AAASEDEELAETAGVAPAEPSEEDDSAKA) is disordered. Acidic residues predominate over residues 202–211 (PSEEDDSAKA).

It belongs to the bacterial ribosomal protein bL9 family.

Its function is as follows. Binds to the 23S rRNA. The polypeptide is Large ribosomal subunit protein bL9 (Roseobacter denitrificans (strain ATCC 33942 / OCh 114) (Erythrobacter sp. (strain OCh 114))).